The primary structure comprises 296 residues: Class E basic helix-loop-helix protein 22 (296 aa).

The tract at residues 26-70 (SAFRPPQGLDLSQPGDRSPLHCYDGPDPSDLLRHHQHHHQASSGA) is disordered. The bHLH domain maps to 153–207 (TLRLNINARERRRMHDLNDALDELRAVIPYAHSPSVRKLSKIATLLLAKNYILMQ).

The protein resides in the nucleus. Functionally, may act as a transcriptional repressor. The polypeptide is Class E basic helix-loop-helix protein 22 (bhlhe22) (Xenopus tropicalis (Western clawed frog)).